Consider the following 191-residue polypeptide: UPF0312 protein Pmen_0419 (191 aa).

Positions 1-22 (MLKNALAALVLGSALIGGQAMA) are cleaved as a signal peptide.

It belongs to the UPF0312 family. Type 1 subfamily.

It is found in the periplasm. This chain is UPF0312 protein Pmen_0419, found in Ectopseudomonas mendocina (strain ymp) (Pseudomonas mendocina).